Consider the following 481-residue polypeptide: FBD-associated F-box protein At5g44490 (481 aa).

Residues 17-64 (DLMSKLTDALISQVLFYLPTKEAVSTSVLSSRWKSVWLLIPDLDLNSS) form the F-box domain. An FBD domain is found at 370-423 (EKSVSFSSVPQCLLSSLEFVEIKISRFGIISLGIGIARFFVENSVVLKKLVVHS).

The protein is FBD-associated F-box protein At5g44490 of Arabidopsis thaliana (Mouse-ear cress).